The primary structure comprises 508 residues: Maturase K (508 aa).

It belongs to the intron maturase 2 family. MatK subfamily.

Its subcellular location is the plastid. It localises to the chloroplast. Its function is as follows. Usually encoded in the trnK tRNA gene intron. Probably assists in splicing its own and other chloroplast group II introns. This Chaetosphaeridium globosum (Charophycean green alga) protein is Maturase K.